The sequence spans 412 residues: UPF0754 membrane protein Synpcc7942_1098 (412 aa).

2 consecutive transmembrane segments (helical) span residues 8–28 (LWLL…DLAI) and 390–410 (IGGV…VWSL).

This sequence belongs to the UPF0754 family.

The protein resides in the cell inner membrane. The polypeptide is UPF0754 membrane protein Synpcc7942_1098 (Synechococcus elongatus (strain ATCC 33912 / PCC 7942 / FACHB-805) (Anacystis nidulans R2)).